The primary structure comprises 120 residues: Glycine cleavage system H protein (120 aa).

In terms of domain architecture, Lipoyl-binding spans 17–99 (IATVGITAHA…RGAGWFFKLK (83 aa)). Lys58 is modified (N6-lipoyllysine).

The protein belongs to the GcvH family. The glycine cleavage system is composed of four proteins: P, T, L and H. Requires (R)-lipoate as cofactor.

Its function is as follows. The glycine cleavage system catalyzes the degradation of glycine. The H protein shuttles the methylamine group of glycine from the P protein to the T protein. This Allorhizobium ampelinum (strain ATCC BAA-846 / DSM 112012 / S4) (Agrobacterium vitis (strain S4)) protein is Glycine cleavage system H protein.